Consider the following 715-residue polypeptide: MPAESGKRFKPSKYVPVSAAAIFLVGATTLFFAFTCPGLSLNVSPAVPIYNAIMFLFVLANFSMATFMDPGIFPRAEEDEDKEDDFRAPLYKTVEIKGIQVRMKWCATCRFYRPPRCSHCSVCDNCVEEFDHHCPWVNNCIGRRNYRYFFLFLLSLTAHIMGVFGFGLLYVLYHIEELSGVRTAVTMAVMCVAGLFFIPVAGLTGFHVVLVARGRTTNEQVTGKFRGGVNPFTNGCCNNVSRVLCSSPAPRYLGRPKKEKTIVIRPPFLRPEVSDGQITVKIMDNGIQGELRRTKSKGSLEITESQSADAEPPPPPKPDLSRYTGLRTHLSLATNEDSSLLGKDSPPTPTMYKYRPGYSSSSTSAAMPHSSSAKLSRGDSLKEPTSIADSSRHPSYRSEPSLEPESFRSPTFGKSFHFDPLSSGSRSSSLKSAQGTGFELGQLQSIRSEGTTSTSYKSLANQTRNGSLSYDSLLTPSDSPDFESVQAGPEPDPPLGYTSPFLSARLAQQREAERHPRLLPTGPPHREPSPVRYDNLSRHIVASLQEREKLLRQSPPLAGREEEPGLGDSGIQSTPGSGHAPRTSSSSDDSKRSPLSKTPLGRPAVPRFGKPDGLRSRGLGSPEPGTTAPYLGRSISYSSQKAPSGVSETEEVALQPLLTPKDEVQLKTTYSKSNGQPKSIGSASPGPGQPPLSSPTRGGVKKVSGVGGTTYEISV.

The Cytoplasmic portion of the chain corresponds to 1 to 13 (MPAESGKRFKPSK). The helical transmembrane segment at 14–34 (YVPVSAAAIFLVGATTLFFAF) threads the bilayer. Residues 35–52 (TCPGLSLNVSPAVPIYNA) lie on the Extracellular side of the membrane. The chain crosses the membrane as a helical span at residues 53–73 (IMFLFVLANFSMATFMDPGIF). The Cytoplasmic portion of the chain corresponds to 74 to 148 (PRAEEDEDKE…NCIGRRNYRY (75 aa)). At tyrosine 91 the chain carries Phosphotyrosine. The region spanning 104–154 (KWCATCRFYRPPRCSHCSVCDNCVEEFDHHCPWVNNCIGRRNYRYFFLFLL) is the DHHC domain. Cysteine 134 acts as the S-palmitoyl cysteine intermediate in catalysis. The helical transmembrane segment at 149-169 (FFLFLLSLTAHIMGVFGFGLL) threads the bilayer. Residues 170–191 (YVLYHIEELSGVRTAVTMAVMC) lie on the Extracellular side of the membrane. A helical membrane pass occupies residues 192-212 (VAGLFFIPVAGLTGFHVVLVA). The Cytoplasmic segment spans residues 213-715 (RGRTTNEQVT…VGGTTYEISV (503 aa)). Serine 247 carries the post-translational modification Phosphoserine. The disordered stretch occupies residues 289–715 (GELRRTKSKG…VGGTTYEISV (427 aa)). Threonine 294 carries the phosphothreonine modification. Residues serine 296 and serine 299 each carry the phosphoserine modification. Threonine 303 bears the Phosphothreonine mark. Residue serine 345 is modified to Phosphoserine. Phosphothreonine occurs at positions 348 and 350. The segment covering 359 to 373 (SSSSTSAAMPHSSSA) has biased composition (low complexity). Serine 380, serine 398, serine 406, and serine 409 each carry phosphoserine. Threonine 411 carries the phosphothreonine modification. Phosphoserine occurs at positions 415, 425, 429, and 432. The span at 422–432 (SSGSRSSSLKS) shows a compositional bias: low complexity. At threonine 436 the chain carries Phosphothreonine. Residues 442–478 (QLQSIRSEGTTSTSYKSLANQTRNGSLSYDSLLTPSD) show a composition bias toward polar residues. A phosphoserine mark is found at serine 529 and serine 554. Positions 581 to 597 (PRTSSSSDDSKRSPLSK) are enriched in low complexity. The residue at position 617 (arginine 617) is an Omega-N-methylarginine. Serine 621 is modified (phosphoserine). Threonine 659 bears the Phosphothreonine mark. Residues 666 to 677 (LKTTYSKSNGQP) show a composition bias toward polar residues. A phosphoserine mark is found at serine 684 and serine 694. Omega-N-methylarginine is present on arginine 697.

It belongs to the DHHC palmitoyltransferase family. ERF2/ZDHHC9 subfamily. Phosphorylation regulates association with endocytic proteins and its subcellular localization. Phosphorylation by LYN during fatty acid uptake leads to inactivation of the activity. Post-translationally, autopalmitoylated. Palmitoylation of the C-terminal tail regulates stimulation-dependent plasma membrane motility. As to expression, highly enriched in brain, detectable in liver and heart, and undetectable in most other tissues.

Its subcellular location is the cell membrane. It catalyses the reaction L-cysteinyl-[protein] + hexadecanoyl-CoA = S-hexadecanoyl-L-cysteinyl-[protein] + CoA. In terms of biological role, palmitoyltransferase that catalyzes the addition of palmitate onto various protein substrates such as CTNND2, CD36, GSDMD, NLRP3, NOD1, NOD2, STAT3 and S1PR1 thus plays a role in various biological processes including cell adhesion, inflammation, fatty acid uptake, bacterial sensing or cardiac functions. Plays an important role in the regulation of synapse efficacy by mediating palmitoylation of delta-catenin/CTNND2, thereby increasing synaptic delivery and surface stabilization of alpha-amino-3-hydroxy-5-methyl-4-isoxazole propionic acid receptors (AMPARs). Under basal conditions, remains at the synaptic membrane through FYN-mediated phosphorylation that prevents association with endocytic proteins. Neuronal activity enhances the internalization and trafficking of DHHC5 from spines to dendritic shafts where it palmitoylates delta-catenin/CTNND2. Regulates cell adhesion at the plasma membrane by palmitoylating GOLGA7B and DSG2. Plays a role in innate immune response by mediating the palmitoylation of NOD1 and NOD2 and their proper recruitment to the bacterial entry site and phagosomes. Also participates in fatty acid uptake by palmitoylating CD36 and thereby targeting it to the plasma membrane. Upon binding of fatty acids to CD36, gets phosphorylated by LYN leading to inactivation and subsequent CD36 caveolar endocytosis. Controls oligodendrocyte development by catalyzing STAT3 palmitoylation. Acts as a regulator of inflammatory response by mediating palmitoylation of NLRP3 and GSDMD. Palmitoylates NLRP3 to promote inflammasome assembly and activation. Activates pyroptosis by catalyzing palmitoylation of gasdermin-D (GSDMD), thereby promoting membrane translocation and pore formation of GSDMD. The polypeptide is Palmitoyltransferase ZDHHC5 (Zdhhc5) (Mus musculus (Mouse)).